The sequence spans 141 residues: Putative pre-16S rRNA nuclease (141 aa).

Belongs to the YqgF nuclease family.

It localises to the cytoplasm. Functionally, could be a nuclease involved in processing of the 5'-end of pre-16S rRNA. This Coxiella burnetii (strain RSA 331 / Henzerling II) protein is Putative pre-16S rRNA nuclease.